The sequence spans 921 residues: 2-oxoadipate dehydrogenase complex component E1 (921 aa).

N6-succinyllysine occurs at positions 184 and 189. Residues 300–319 form a disordered region; that stretch reads GKTRGRQQSREDGDYSPNGS. 2 positions are modified to N6-succinyllysine: K801 and K819.

This sequence belongs to the alpha-ketoglutarate dehydrogenase family. As to quaternary structure, the 2-oxoadipate dehydrogenase complex is composed of OADH (2-oxoadipate dehydrogenase; E1a), DLST (dihydrolipoamide succinyltransferase; E2) and DLD (dihydrolipoamide dehydrogenase; E3). E1a functional unit is a dimer. It depends on thiamine diphosphate as a cofactor.

It localises to the mitochondrion. The catalysed reaction is N(6)-[(R)-lipoyl]-L-lysyl-[protein] + 2-oxoadipate + H(+) = N(6)-[(R)-S(8)-glutaryldihydrolipoyl]-L-lysyl-[protein] + CO2. It functions in the pathway amino-acid degradation. Its function is as follows. 2-oxoadipate dehydrogenase (E1a) component of the 2-oxoadipate dehydrogenase complex (OADHC). Participates in the first step, rate limiting for the overall conversion of 2-oxoadipate (alpha-ketoadipate) to glutaryl-CoA and CO(2) catalyzed by the whole OADHC. Catalyzes the irreversible decarboxylation of 2-oxoadipate via the thiamine diphosphate (ThDP) cofactor and subsequent transfer of the decarboxylated acyl intermediate on an oxidized dihydrolipoyl group that is covalently amidated to the E2 enzyme (dihydrolipoyllysine-residue succinyltransferase or DLST). Can catalyze the decarboxylation of 2-oxoglutarate in vitro, but at a much lower rate than 2-oxoadipate. Responsible for the last step of L-lysine, L-hydroxylysine and L-tryptophan catabolism with the common product being 2-oxoadipate. The polypeptide is 2-oxoadipate dehydrogenase complex component E1 (Dhtkd1) (Mus musculus (Mouse)).